A 236-amino-acid chain; its full sequence is Small ribosomal subunit protein uS3 (236 aa).

The 69-residue stretch at 39–107 folds into the KH type-2 domain; that stretch reads IREVLEKQLK…EVHLNIVEVR (69 aa). The segment at 214–236 is disordered; sequence ASERRALEGGDSGGGRSRRDDRG.

This sequence belongs to the universal ribosomal protein uS3 family. As to quaternary structure, part of the 30S ribosomal subunit. Forms a tight complex with proteins S10 and S14.

Binds the lower part of the 30S subunit head. Binds mRNA in the 70S ribosome, positioning it for translation. The sequence is that of Small ribosomal subunit protein uS3 from Parvibaculum lavamentivorans (strain DS-1 / DSM 13023 / NCIMB 13966).